The following is a 1033-amino-acid chain: NACHT, LRR and PYD domains-containing protein 11 (1033 aa).

One can recognise a Pyrin domain in the interval 1–91; the sequence is MAESDSTDFD…CRKIIGRRNR (91 aa). Residues 147–470 enclose the NACHT domain; the sequence is LNVFLMGERA…AFLMAVPNYL (324 aa). ATP is bound at residue 153–160; that stretch reads GERASGKT. LRR repeat units lie at residues 588–611, 632–655, 745–768, 802–827, 859–882, and 919–944; these read CCHL…LIRP, MESL…ILSK, GGSL…ILCD, SPTL…TFPL, NEKL…LLCG, and LERL…LISP.

It belongs to the NLRP family.

Involved in inflammation. The polypeptide is NACHT, LRR and PYD domains-containing protein 11 (NLRP11) (Homo sapiens (Human)).